Here is a 603-residue protein sequence, read N- to C-terminus: Protein Spindly (603 aa).

Position 1 is an N-acetylmethionine (M1). Residues 1 to 442 are a coiled coil; it reads MESDVIADLR…LKLKYEPEEK (442 aa). Residues S513 and S553 each carry the phosphoserine modification. The segment at 542–577 is disordered; it reads ALSERSRNTPNSPRLAAESRLQREVKQGKETASKLE. The segment covering 561-577 has biased composition (basic and acidic residues); that stretch reads RLQREVKQGKETASKLE.

It belongs to the Spindly family. Interacts with KNTC1 and ZW10. These interactions appear weak and may be transient or indirect. Interacts with dynein intermediate chain and dynactin (DCTN1). Interacts with the catalytically active form of USP45. Post-translationally, monoubiquitinated with'Lys-48' linkage. Deubiquitinated by USP45.

The protein resides in the cytoplasm. Its subcellular location is the cytoskeleton. It is found in the microtubule organizing center. It localises to the centrosome. The protein localises to the chromosome. The protein resides in the centromere. Its subcellular location is the kinetochore. It is found in the nucleus. It localises to the spindle pole. Its function is as follows. Required for the localization of dynein and dynactin to the mitotic kintochore. Dynein is believed to control the initial lateral interaction between the kinetochore and spindle microtubules and to facilitate the subsequent formation of end-on kinetochore-microtubule attachments mediated by the NDC80 complex. Also required for correct spindle orientation. Does not appear to be required for the removal of spindle assembly checkpoint (SAC) proteins from the kinetochore upon bipolar spindle attachment. Acts as an adapter protein linking the dynein motor complex to various cargos and converts dynein from a non-processive to a highly processive motor in the presence of dynactin. Facilitates the interaction between dynein and dynactin and activates dynein processivity (the ability to move along a microtubule for a long distance without falling off the track). Plays a role in cell migration. In Bos taurus (Bovine), this protein is Protein Spindly.